A 502-amino-acid chain; its full sequence is ATP synthase subunit alpha (502 aa).

The tract at residues 119-139 (GPIATTKSRPIESPAPGVMDR) is disordered. Residue 169–176 (GDRQTGKT) coordinates ATP.

It belongs to the ATPase alpha/beta chains family. F-type ATPases have 2 components, CF(1) - the catalytic core - and CF(0) - the membrane proton channel. CF(1) has five subunits: alpha(3), beta(3), gamma(1), delta(1), epsilon(1). CF(0) has three main subunits: a(1), b(2) and c(9-12). The alpha and beta chains form an alternating ring which encloses part of the gamma chain. CF(1) is attached to CF(0) by a central stalk formed by the gamma and epsilon chains, while a peripheral stalk is formed by the delta and b chains.

It localises to the cell membrane. The enzyme catalyses ATP + H2O + 4 H(+)(in) = ADP + phosphate + 5 H(+)(out). Functionally, produces ATP from ADP in the presence of a proton gradient across the membrane. The alpha chain is a regulatory subunit. The protein is ATP synthase subunit alpha of Alkalihalophilus pseudofirmus (strain ATCC BAA-2126 / JCM 17055 / OF4) (Bacillus pseudofirmus).